Reading from the N-terminus, the 192-residue chain is Probable nicotinate-nucleotide adenylyltransferase (192 aa).

This sequence belongs to the NadD family.

It catalyses the reaction nicotinate beta-D-ribonucleotide + ATP + H(+) = deamido-NAD(+) + diphosphate. It participates in cofactor biosynthesis; NAD(+) biosynthesis; deamido-NAD(+) from nicotinate D-ribonucleotide: step 1/1. Catalyzes the reversible adenylation of nicotinate mononucleotide (NaMN) to nicotinic acid adenine dinucleotide (NaAD). This is Probable nicotinate-nucleotide adenylyltransferase from Bradyrhizobium sp. (strain ORS 278).